Reading from the N-terminus, the 175-residue chain is Keratin-associated protein 13-2 (175 aa).

A run of 5 repeats spans residues 46–55 (CQLGSSLYRG), 56–65 (CQEICWEPTS), 66–75 (CQTSYVESSP), 76–85 (CQTSCYRPRT), and 92–101 (CKTTYSGSLG). The interval 46 to 101 (CQLGSSLYRGCQEICWEPTSCQTSYVESSPCQTSCYRPRTSLLCSPCKTTYSGSLG) is 5 X 10 AA approximate repeats.

Belongs to the PMG family. In terms of assembly, interacts with hair keratins.

In terms of biological role, in the hair cortex, hair keratin intermediate filaments are embedded in an interfilamentous matrix, consisting of hair keratin-associated proteins (KRTAP), which are essential for the formation of a rigid and resistant hair shaft through their extensive disulfide bond cross-linking with abundant cysteine residues of hair keratins. The matrix proteins include the high-sulfur and high-glycine-tyrosine keratins. The protein is Keratin-associated protein 13-2 (KRTAP13-2) of Homo sapiens (Human).